The primary structure comprises 173 residues: Ribosome maturation factor RimM (173 aa).

One can recognise a PRC barrel domain in the interval 97–171; it reads EGEFFYHEII…QITIEPMEGL (75 aa).

Belongs to the RimM family. Binds ribosomal protein uS19.

It is found in the cytoplasm. Its function is as follows. An accessory protein needed during the final step in the assembly of 30S ribosomal subunit, possibly for assembly of the head region. Essential for efficient processing of 16S rRNA. May be needed both before and after RbfA during the maturation of 16S rRNA. It has affinity for free ribosomal 30S subunits but not for 70S ribosomes. The chain is Ribosome maturation factor RimM from Halalkalibacterium halodurans (strain ATCC BAA-125 / DSM 18197 / FERM 7344 / JCM 9153 / C-125) (Bacillus halodurans).